Here is a 100-residue protein sequence, read N- to C-terminus: Integration host factor subunit alpha (100 aa).

A disordered region spans residues 53–72 (FDLRDKRQRPGRNPKTGEEI).

The protein belongs to the bacterial histone-like protein family. As to quaternary structure, heterodimer of an alpha and a beta chain.

In terms of biological role, this protein is one of the two subunits of integration host factor, a specific DNA-binding protein that functions in genetic recombination as well as in transcriptional and translational control. The sequence is that of Integration host factor subunit alpha from Pseudomonas entomophila (strain L48).